A 303-amino-acid chain; its full sequence is Ribosomal RNA small subunit methyltransferase H (303 aa).

S-adenosyl-L-methionine-binding positions include 36–38, aspartate 55, phenylalanine 81, aspartate 101, and glutamine 108; that span reads CGH.

This sequence belongs to the methyltransferase superfamily. RsmH family.

It localises to the cytoplasm. It catalyses the reaction cytidine(1402) in 16S rRNA + S-adenosyl-L-methionine = N(4)-methylcytidine(1402) in 16S rRNA + S-adenosyl-L-homocysteine + H(+). In terms of biological role, specifically methylates the N4 position of cytidine in position 1402 (C1402) of 16S rRNA. This chain is Ribosomal RNA small subunit methyltransferase H, found in Aster yellows witches'-broom phytoplasma (strain AYWB).